The chain runs to 447 residues: Elongation factor 1-alpha (447 aa).

One can recognise a tr-type G domain in the interval 5–230; it reads KIHISIVVIG…DQISEPKRPS (226 aa). Positions 14 to 21 are G1; sequence GHVDSGKS. Residue 14–21 coordinates GTP; sequence GHVDSGKS. Lysine 55 is subject to N6,N6-dimethyllysine. Positions 70 to 74 are G2; sequence GITID. At lysine 79 the chain carries N6,N6,N6-trimethyllysine. Residues 91 to 94 form a G3 region; sequence DAPG. Residues 91–95 and 153–156 each bind GTP; these read DAPGH and NKMD. Residues 153-156 are G4; that stretch reads NKMD. Lysine 187 bears the N6,N6,N6-trimethyllysine mark. The interval 194–196 is G5; it reads SGF. Position 261 is an N6-methyllysine (lysine 261). Glutamate 289 is subject to 5-glutamyl glycerylphosphorylethanolamine. Lysine 306 is modified (N6,N6,N6-trimethyllysine). Glutamate 362 is subject to 5-glutamyl glycerylphosphorylethanolamine. At lysine 396 the chain carries N6,N6,N6-trimethyllysine.

Belongs to the TRAFAC class translation factor GTPase superfamily. Classic translation factor GTPase family. EF-Tu/EF-1A subfamily.

It is found in the cytoplasm. Its function is as follows. This protein promotes the GTP-dependent binding of aminoacyl-tRNA to the A-site of ribosomes during protein biosynthesis. In Daucus carota (Wild carrot), this protein is Elongation factor 1-alpha.